The following is a 1519-amino-acid chain: Rho guanine nucleotide exchange factor 40 (1519 aa).

Disordered regions lie at residues 194 to 237 (VGHQ…PVEG) and 253 to 503 (RGSP…LETV). A compositionally biased stretch (pro residues) spans 200 to 218 (TLPPELPSGPPGLPSPPLP). At Ser262 the chain carries Phosphoserine. Residues 280–290 (KGRHRRHRAWM) are compositionally biased toward basic residues. A compositionally biased stretch (low complexity) spans 314–341 (ASPESPPGAEAVPEAAVLEVSEPPAEAV). A compositionally biased stretch (gly residues) spans 355–367 (LRGGGGGGQGAEG). Thr371 is subject to Phosphothreonine. Residues 374–386 (RTGKGNRRKKRAA) show a composition bias toward basic residues. Ser419 carries the post-translational modification Phosphoserine. Residues 421 to 457 (SEHKLPECHLVKEEYEGSGKPESEPKELKTAGEKEPQ) are compositionally biased toward basic and acidic residues. A coiled-coil region spans residues 828-871 (SAEVQERLAQAREALALEENATSQKVLDIFEQRLEQVESGLHRA). 2 positions are modified to phosphoserine: Ser931 and Ser961. The stretch at 934 to 961 (ALREWGRCQARCQELERRIQQHVGEEAS) forms a coiled coil. The tract at residues 955-1031 (HVGEEASPRG…ELAPEAEGRP (77 aa)) is disordered. Positions 980-996 (WGPRSPSPSLSSLLLPS) are enriched in low complexity. Ser1082 carries the post-translational modification Phosphoserine. The region spanning 1085–1253 (AQQRLVSELI…REQEARGRDL (169 aa)) is the DH domain. The region spanning 1265-1372 (DLKEQGQLLH…WTSSIAQLLW (108 aa)) is the PH domain. Phosphoserine occurs at positions 1433, 1438, and 1474. The interval 1466–1519 (TLDSSGDVSPGPRNSPSLQPPHPGSSTPTLASRGILGLSRQSHARALSDPTTPL) is disordered. Over residues 1467 to 1482 (LDSSGDVSPGPRNSPS) the composition is skewed to polar residues. Thr1492 carries the post-translational modification Phosphothreonine.

As to expression, expressed at higher level in the central nervous system and skeletal muscle and greater abundance in fetal than adult brain (at protein level).

It is found in the cytoplasm. Functionally, may act as a guanine nucleotide exchange factor (GEF). In Homo sapiens (Human), this protein is Rho guanine nucleotide exchange factor 40 (ARHGEF40).